A 575-amino-acid chain; its full sequence is MDGDRGKRDSYWSTSPSGSTTKPASGWERSSKADTWLLILSFTQWALSIATVIICIIISARQGYSMKEYSMTVEALNMSSREVKESLTSLIRQEVIARAVNIQSSVQTGIPVLLNKNSRDVIQMIDKSCSRQELTQHCESTIAVHHADGIAPLEPHSFWRCPVGEPYLSSDPEISLLPGPSLLSGSTTISGCVRLPSLSIGEAIYAYSSNLITQGCADIGKSYQVLQLGYISLNSDMFPDLNPVVSHTYDINDNRKSCSVVATGTRGYQLCSMPTVDERTDYSSDGIEDLVLDVLDLKGRTKSHRYRNSEVDLDHPFSALYPSVGNGIATEGSLIFLGYGGLTTPLQGDTKCRTQGCQQVSQDTCNEALKITWLGGKQVVSVIIQVNDYLSERPKIRVTTIPITQNYLGAEGRLLKLGDRVYIYTRSSGWHSQLQIGVLDVSHPLTINWTPHEALSRPGNKECNWYNKCPKECISGVYTDAYPLSPDAANVATVTLYANTSRVNPTIMYSNTTNIINMLRIKDVQLEAAYTTTSCITHFGKGYCFHIIEINQKSLNTLQPMLFKTSIPKLCKAES.

The span at 1-10 (MDGDRGKRDS) shows a compositional bias: basic and acidic residues. The segment at 1 to 27 (MDGDRGKRDSYWSTSPSGSTTKPASGW) is disordered. Residues 1-37 (MDGDRGKRDSYWSTSPSGSTTKPASGWERSSKADTWL) lie on the Intravirion side of the membrane. Positions 10–14 (SYWST) are incorporation in virion. The span at 11-23 (YWSTSPSGSTTKP) shows a compositional bias: polar residues. A helical; Signal-anchor for type II membrane protein membrane pass occupies residues 38–58 (LILSFTQWALSIATVIICIII). Positions 59–140 (SARQGYSMKE…RQELTQHCES (82 aa)) are interaction with F protein. Residues 59-575 (SARQGYSMKE…SIPKLCKAES (517 aa)) lie on the Virion surface side of the membrane. N-linked (GlcNAc...) asparagine; by host glycosylation is present at Asn77. 4 disulfide bridges follow: Cys192–Cys216, Cys258–Cys271, Cys357–Cys469, and Cys463–Cys473. Residues 254–259 (NRKSCS) are involved in neuraminidase activity. Residues Asn499 and Asn511 are each glycosylated (N-linked (GlcNAc...) asparagine; by host). Cysteines 535 and 544 form a disulfide.

It belongs to the paramyxoviruses hemagglutinin-neuraminidase family. In terms of assembly, homotetramer; composed of disulfide-linked homodimers. Interacts with F protein trimer. Post-translationally, N-glycosylated; glycans consist of a mixture of high mannose-type oligosaccharides and of complex-type oligosaccharides.

The protein localises to the virion membrane. It localises to the host cell membrane. It catalyses the reaction Hydrolysis of alpha-(2-&gt;3)-, alpha-(2-&gt;6)-, alpha-(2-&gt;8)- glycosidic linkages of terminal sialic acid residues in oligosaccharides, glycoproteins, glycolipids, colominic acid and synthetic substrates.. Attaches the virus to sialic acid-containing cell receptors and thereby initiating infection. Binding of HN protein to the receptor induces a conformational change that allows the F protein to trigger virion/cell membranes fusion. Functionally, neuraminidase activity ensures the efficient spread of the virus by dissociating the mature virions from the neuraminic acid containing glycoproteins. The protein is Hemagglutinin-neuraminidase (HN) of Sendai virus (strain Z) (SeV).